Consider the following 180-residue polypeptide: Crossover junction endodeoxyribonuclease RuvC (180 aa).

Catalysis depends on residues D7, E66, and D138. 3 residues coordinate Mg(2+): D7, E66, and D138.

Belongs to the RuvC family. In terms of assembly, homodimer which binds Holliday junction (HJ) DNA. The HJ becomes 2-fold symmetrical on binding to RuvC with unstacked arms; it has a different conformation from HJ DNA in complex with RuvA. In the full resolvosome a probable DNA-RuvA(4)-RuvB(12)-RuvC(2) complex forms which resolves the HJ. Mg(2+) serves as cofactor.

It is found in the cytoplasm. The enzyme catalyses Endonucleolytic cleavage at a junction such as a reciprocal single-stranded crossover between two homologous DNA duplexes (Holliday junction).. The RuvA-RuvB-RuvC complex processes Holliday junction (HJ) DNA during genetic recombination and DNA repair. Endonuclease that resolves HJ intermediates. Cleaves cruciform DNA by making single-stranded nicks across the HJ at symmetrical positions within the homologous arms, yielding a 5'-phosphate and a 3'-hydroxyl group; requires a central core of homology in the junction. The consensus cleavage sequence is 5'-(A/T)TT(C/G)-3'. Cleavage occurs on the 3'-side of the TT dinucleotide at the point of strand exchange. HJ branch migration catalyzed by RuvA-RuvB allows RuvC to scan DNA until it finds its consensus sequence, where it cleaves and resolves the cruciform DNA. In Burkholderia orbicola (strain AU 1054), this protein is Crossover junction endodeoxyribonuclease RuvC.